A 122-amino-acid chain; its full sequence is Defensin-like protein 181 (122 aa).

An N-terminal signal peptide occupies residues 1 to 26; sequence MERIPSLASLVSLLIIFATVVNQTRA. 8 disulfide bridges follow: Cys29–Cys70, Cys36–Cys55, Cys39–Cys64, Cys43–Cys66, Cys76–Cys122, Cys87–Cys107, Cys92–Cys116, and Cys96–Cys118.

The protein belongs to the DEFL family.

The protein resides in the secreted. Confers broad-spectrum resistance to pathogens. The polypeptide is Defensin-like protein 181 (PDF3.1) (Arabidopsis thaliana (Mouse-ear cress)).